Reading from the N-terminus, the 412-residue chain is uncharacterized protein (412 aa).

This sequence belongs to the PQQ oxidoreductase GdhB family. Pyrroloquinoline quinone is required as a cofactor.

This is an uncharacterized protein from Synechocystis sp. (strain ATCC 27184 / PCC 6803 / Kazusa).